The chain runs to 900 residues: MPRTPKRVHQEAKEESAQADQPPKKSASEDVEAFTNKGFKNAIAATKAANAFPQGTARALYLSYPGYARVMEDLTQRVVALIGNVLHSKDIKGDIKKRQPEEQFEMVQECNDVLFERITTNLDIKGGLRRNTQQVVEAQVDVMSSSTSIEPAVASPQTQGTPKAGSWNRTTGTPQRSMVSARLFTAKNIVRPQTQFREPVDNSAQNPFVPRLKEKPNSLKPLALLPEYDDAGNVQSYLHPYEFELLKFQPPEEQFQKQKPVLPALMAETELMVVDTVEKLKQALEELRQAPQIAIDVEHHSYRTFMGITCLVQMSTRSKDYIFDTLILRDDMHILNLVLTDPKKLKILHGADLDIEWLQRDLSLYIVNMFDTHRAAKALNMARLSLAYLLKHYLDLDVDKSLQLADWRMRPLPQQLVDYARQDTHFLIYVYGRMTNDLLQQHAEPGLLGSVYQQSTDVCKKRYNKPHIGPESHLDLVRKTKRSFDNRQLYALRGIFEWRDATARSEDESYGYVLPNHMMLQIAESLPREMQGILACCNPIPPLVRQQLHTLHQIVLKARDQPLVKPILEAHSSTQAALPPSTKDFSSKLYCPHDFSQLEEIRDDLPTLLKRNSTTGKLEVPNKEEVAKVDPTLAAPAMALFEKQSKPTQEEEQRWAHLRKESQTMRMPYKRYLAILPLMVQLKADQLARERSELQKRQLCPAAPTVEQNIKLEAHAIGKEDDDMYSVPLKEQLKRKHPQANVKTDPEQQPTASKRPRKDENSQTKPPVKIEPVEKVQQALGESDDEVVEVPIERQATEPPKPSPAQNNRKQKKNQFQRGFKAKNRGNHPQSSSQQVPQHKGTGNFDYKNVDFRQFKGGAQRARGTEIKQQIRGKNRPNNRNNKQFNKLFTFSNVRKEGKK.

2 disordered regions span residues 1–31 (MPRT…SEDV) and 147–174 (TSIE…TGTP). The segment covering 8–28 (VHQEAKEESAQADQPPKKSAS) has biased composition (basic and acidic residues). In terms of domain architecture, 3'-5' exonuclease spans 273-438 (VVDTVEKLKQ…YVYGRMTNDL (166 aa)). Positions 296, 298, 354, and 423 each coordinate Mg(2+). The HRDC domain maps to 485 to 565 (DNRQLYALRG…LKARDQPLVK (81 aa)). The interval 731–900 (EQLKRKHPQA…FSNVRKEGKK (170 aa)) is disordered. Over residues 809–826 (RKQKKNQFQRGFKAKNRG) the composition is skewed to basic residues. The span at 878–887 (NNRNNKQFNK) shows a compositional bias: low complexity.

Belongs to the exosome component 10/RRP6 family. Component of the RNA exosome complex. Interacts with spn-A/Rad51; the interaction is required for the recruitment of spn-A to the DNA-damage response foci. Interacts with Su(var)3-9, a heterochromatin factor; the interaction promotes association of Rrp6 with a subset of genomic loci. Interacts with Su(var)205, a heterochromatin factor. Interacts with HDAC1, a heterochromatin factor. Requires Mg(2+) as cofactor. In terms of tissue distribution, salivary gland (at protein level).

Its subcellular location is the nucleus. The protein resides in the chromosome. It is found in the cytoplasm. The protein localises to the cell cortex. It localises to the cytoskeleton. Its subcellular location is the microtubule organizing center. The protein resides in the centrosome. It is found in the spindle. The protein localises to the midbody. Catalytic component of the RNA exosome complex which has 3'-&gt;5' exoribonuclease activity and participates in a multitude of cellular RNA processing and degradation events. Degrades a large variety of non-coding RNAs that are processed by the exosome, such as pre-rRNAs and some small nucleolar RNAs (snoRNAs). Degrades transcripts derived from different types of heterochromatic repeats, such as subtelomeric minisatellites and simple gagaa repeats. Degrades transcripts derived from transposons and transposon fragments. Degrades chromatin-associated transcripts and contributes to the compaction of heterochromatin. Required for the efficient repair of DNA double-strand breaks via homologous recombination after irradiation. Required for cell proliferation and error-free mitosis. This Drosophila melanogaster (Fruit fly) protein is Exosome complex component 10 homolog.